A 943-amino-acid polypeptide reads, in one-letter code: Isoleucine--tRNA ligase (943 aa).

A 'HIGH' region motif is present at residues 59–69 (PYANGRIHLGH). Glu-577 provides a ligand contact to L-isoleucyl-5'-AMP. The 'KMSKS' region signature appears at 618–622 (KMSKS). Residue Lys-621 coordinates ATP. 4 residues coordinate Zn(2+): Cys-906, Cys-909, Cys-926, and Cys-929.

The protein belongs to the class-I aminoacyl-tRNA synthetase family. IleS type 1 subfamily. In terms of assembly, monomer. Zn(2+) serves as cofactor.

The protein resides in the cytoplasm. The enzyme catalyses tRNA(Ile) + L-isoleucine + ATP = L-isoleucyl-tRNA(Ile) + AMP + diphosphate. In terms of biological role, catalyzes the attachment of isoleucine to tRNA(Ile). As IleRS can inadvertently accommodate and process structurally similar amino acids such as valine, to avoid such errors it has two additional distinct tRNA(Ile)-dependent editing activities. One activity is designated as 'pretransfer' editing and involves the hydrolysis of activated Val-AMP. The other activity is designated 'posttransfer' editing and involves deacylation of mischarged Val-tRNA(Ile). In Stenotrophomonas maltophilia (strain K279a), this protein is Isoleucine--tRNA ligase.